Consider the following 341-residue polypeptide: Small ribosomal subunit biogenesis GTPase RsgA (341 aa).

The 157-residue stretch at 112 to 268 (RQQLIAANLD…LIDTPGMREL (157 aa)) folds into the CP-type G domain. Residues 157–160 (TKVD) and 210–218 (GSSGAGKST) contribute to the GTP site. Residues cysteine 290, cysteine 295, histidine 297, and cysteine 303 each coordinate Zn(2+).

This sequence belongs to the TRAFAC class YlqF/YawG GTPase family. RsgA subfamily. As to quaternary structure, monomer. Associates with 30S ribosomal subunit, binds 16S rRNA. Zn(2+) serves as cofactor.

It localises to the cytoplasm. One of several proteins that assist in the late maturation steps of the functional core of the 30S ribosomal subunit. Helps release RbfA from mature subunits. May play a role in the assembly of ribosomal proteins into the subunit. Circularly permuted GTPase that catalyzes slow GTP hydrolysis, GTPase activity is stimulated by the 30S ribosomal subunit. In Xylella fastidiosa (strain 9a5c), this protein is Small ribosomal subunit biogenesis GTPase RsgA.